The chain runs to 549 residues: Cation/acetate symporter ActP (549 aa).

13 consecutive transmembrane segments (helical) span residues 33–53 (WQAIIMFLIFVVFTLGITYWA), 77–97 (LAIAGDYMSAASFLGISALVF), 103–123 (GLIYSLGFLVGWPIILFLIAE), 148–168 (ILSACGSLVVVALYLIAQMVG), 183–203 (IAVVLVGVLMMMYVLFGGMLA), 206–226 (WVQIIKAVLLLFGASFMAFMV), 262–282 (ISALSLGLGLMFGTAGLPHIL), 303–323 (GFMGYFYILTFIIGFGAIMLV), 355–375 (LFLGFISAVAFATILAVVAGL), 404–424 (VSKITVLILGVIAIILGVLFE), 428–448 (IAFMVGLAFAIAASCNFPIIL), 464–484 (GGWLGLITAVVLMILGPTIWV), and 493–513 (IFPYEYPALFSISVAFLGIWL).

This sequence belongs to the sodium:solute symporter (SSF) (TC 2.A.21) family.

It localises to the cell inner membrane. Its function is as follows. Transports acetate. This is Cation/acetate symporter ActP from Escherichia coli O1:K1 / APEC.